A 328-amino-acid chain; its full sequence is Malate dehydrogenase (328 aa).

13 to 19 is an NAD(+) binding site; sequence GAAGQIS. Residues R94 and R100 each coordinate substrate. Residues N107, Q114, and 131-133 contribute to the NAD(+) site; that span reads VGN. Substrate is bound by residues N133 and R164. Residue H189 is the Proton acceptor of the active site.

It belongs to the LDH/MDH superfamily. MDH type 2 family.

The enzyme catalyses (S)-malate + NAD(+) = oxaloacetate + NADH + H(+). In terms of biological role, catalyzes the reversible oxidation of malate to oxaloacetate. The protein is Malate dehydrogenase of Alcanivorax borkumensis (strain ATCC 700651 / DSM 11573 / NCIMB 13689 / SK2).